The primary structure comprises 131 residues: Histone H2B (131 aa).

Residues 1–19 are compositionally biased toward basic and acidic residues; it reads MAPKAEKKPASKAPAEKKP. The segment at 1–38 is disordered; sequence MAPKAEKKPASKAPAEKKPAAKKTASSTDGGKKRTKAR. An N6-acetyllysine; alternate mark is found at K7 and K8. Residues K7 and K8 each participate in a glycyl lysine isopeptide (Lys-Gly) (interchain with G-Cter in SUMO); alternate cross-link. Phosphoserine is present on S11. Residue K12 is modified to N6-acetyllysine. An N6-acetyllysine; alternate modification is found at K17. K17 participates in a covalent cross-link: Glycyl lysine isopeptide (Lys-Gly) (interchain with G-Cter in SUMO); alternate. K18 is covalently cross-linked (Glycyl lysine isopeptide (Lys-Gly) (interchain with G-Cter in SUMO)). K125 participates in a covalent cross-link: Glycyl lysine isopeptide (Lys-Gly) (interchain with G-Cter in ubiquitin).

It belongs to the histone H2B family. In terms of assembly, the nucleosome is a histone octamer containing two molecules each of H2A, H2B, H3 and H4 assembled in one H3-H4 heterotetramer and two H2A-H2B heterodimers. The octamer wraps approximately 147 bp of DNA. Post-translationally, monoubiquitinated by the UBC2-BRE1 complex to form H2BK123ub1. H2BK123ub1 gives a specific tag for epigenetic transcriptional activation and is also prerequisite for H3K4me and H3K79me formation. H2BK123ub1 also modulates the formation of double-strand breaks during meiosis and is a prerequisite for DNA-damage checkpoint activation. Phosphorylated by STE20 to form H2BS10ph during progression through meiotic prophase. May be correlated with chromosome condensation. In terms of processing, acetylated by GCN5 to form H2BK11ac and H2BK16ac. H2BK16ac can also be formed by ESA1. Acetylation of N-terminal lysines and particularly formation of H2BK11acK16ac has a positive effect on transcription. Post-translationally, sumoylation to form H2BK6su or H2BK7su, and probably also H2BK16su or H2BK17su, occurs preferentially near the telomeres and represses gene transcription.

It localises to the nucleus. The protein resides in the chromosome. Its function is as follows. Core component of nucleosome. Nucleosomes wrap and compact DNA into chromatin, limiting DNA accessibility to the cellular machineries which require DNA as a template. Histones thereby play a central role in transcription regulation, DNA repair, DNA replication and chromosomal stability. DNA accessibility is regulated via a complex set of post-translational modifications of histones, also called histone code, and nucleosome remodeling. The chain is Histone H2B (HTB1) from Lodderomyces elongisporus (strain ATCC 11503 / CBS 2605 / JCM 1781 / NBRC 1676 / NRRL YB-4239) (Yeast).